Consider the following 706-residue polypeptide: G2/M phase-specific E3 ubiquitin-protein ligase (706 aa).

Residues 11 to 51 (NLACVFCRKHDDCPNKYGEKKTKEKWNLTVHYYCLLMSSGI) form a C2HC pre-PHD-type zinc finger. The segment at 79-128 (LKCCVCKKNGASIGCVAPRCKRSYHFPCGLQRECIFQFTGNFASFCWDHR) adopts a PHD-type 1 zinc-finger fold. The PHD-type 2; degenerate zinc finger occupies 143-193 (PCTICLEFIEPIPSYNILRSPCCKNAWFHRDCLQVQAINAGVFFFRCTICN). The PHD-type 3 zinc-finger motif lies at 237–286 (RCRCKEGRDYNAPDSKWEIKRCQCCGSSGTHLACSSLRSWEQNWECLECR). The HECT domain maps to 371–698 (IWNSALDAFR…IRNTLRLEKE (328 aa)).

Predominantly expressed in brain, liver, kidney, testes and ovary.

The protein resides in the nucleus. It is found in the nucleolus. It localises to the cytoplasm. It catalyses the reaction S-ubiquitinyl-[E2 ubiquitin-conjugating enzyme]-L-cysteine + [acceptor protein]-L-lysine = [E2 ubiquitin-conjugating enzyme]-L-cysteine + N(6)-ubiquitinyl-[acceptor protein]-L-lysine.. It participates in protein modification; protein ubiquitination. E3 ubiquitin-protein ligase which accepts ubiquitin from an E2 ubiquitin-conjugating enzyme in the form of a thioester and then directly transfers the ubiquitin to targeted substrates. Essential in early embryonic development to prevent apoptotic death. In Homo sapiens (Human), this protein is G2/M phase-specific E3 ubiquitin-protein ligase (G2E3).